Reading from the N-terminus, the 544-residue chain is POTE ankyrin domain family member B2 (544 aa).

ANK repeat units follow at residues 135-167, 168-200, 201-233, 234-266, and 267-299; these read QKRTALHLASANGNSEVVQLLLDRRCQLNVLDN, KKRTALIKAVQCQEDECVLMLLEHGADGNIQDE, YGNTALHYAIYNEDKLMAKALLLYGADIESKNK, CGLTPLLLGVHEQKQEVVKFLIKKKANLNALDR, and YGRTALILAVCCGSASIVNLLLEQNVDVSSQDL. The tract at residues 332–457 is disordered; the sequence is SSENSNPEQD…NTGISQDEIL (126 aa). Composition is skewed to basic and acidic residues over residues 340–355 and 364–375; these read QDLKLTSEEESQRLKV and MSQEPEINKDCD. A compositionally biased stretch (polar residues) spans 439 to 457; it reads TQKQLSEEQNTGISQDEIL.

It belongs to the POTE family.

This is POTE ankyrin domain family member B2 (POTEB2) from Homo sapiens (Human).